The following is a 110-amino-acid chain: Glycine cleavage system H-like protein (110 aa).

The Lipoyl-binding domain occupies 10–97 (VEKVGDLYVF…PEENWLFKLD (88 aa)). ADP-ribosyl aspartic acid is present on aspartate 27. Lysine 56 bears the N6-lipoyllysine mark.

In terms of assembly, lipoylated GcvH-L directly interacts with SAV0325, which reverses the SirTM-mediated mono-ADP-ribosylation of GcvH-L, and with the oxidoreductase SAV0322. In terms of processing, is lipoylated on K-56 by LplA2 (SAV0327) and then mono-ADP-ribosylated, probably on D-27, by SirTM (SAV0326). The mono-ADP-ribosylation state of GcvH-L might regulate the availability of the lipoyl moiety for redox reactions; ADP-ribosylation would inhibit the interaction of the oxidoreductase with GcvH-L when it is not required, thus ADP-ribosylation of GcvH-L might be acting to keep the response 'off' under non-stress conditions.

May act as a carrier protein for the ROS scavenging lipoyl moiety and/or as a substrate for oxidoreductases such as SAV0322 and SAV0323. The protein is Glycine cleavage system H-like protein of Staphylococcus aureus (strain Mu50 / ATCC 700699).